Here is a 544-residue protein sequence, read N- to C-terminus: Chaperonin GroEL 1 (544 aa).

Residues Thr-30–Pro-33, Lys-51, Asp-87–Thr-91, Gly-415, Asp-481–Leu-483, and Asp-497 contribute to the ATP site.

The protein belongs to the chaperonin (HSP60) family. Forms a cylinder of 14 subunits composed of two heptameric rings stacked back-to-back. Interacts with the co-chaperonin GroES.

It localises to the cytoplasm. The enzyme catalyses ATP + H2O + a folded polypeptide = ADP + phosphate + an unfolded polypeptide.. Together with its co-chaperonin GroES, plays an essential role in assisting protein folding. The GroEL-GroES system forms a nano-cage that allows encapsulation of the non-native substrate proteins and provides a physical environment optimized to promote and accelerate protein folding. The chain is Chaperonin GroEL 1 from Chlamydia pneumoniae (Chlamydophila pneumoniae).